We begin with the raw amino-acid sequence, 375 residues long: Chaperone protein DnaJ 1 (375 aa).

In terms of domain architecture, J spans 4 to 68 (DYYAILGVER…EKRRIVDMGG (65 aa)). The CR-type zinc-finger motif lies at 127–209 (GTKKPITIDT…CGGDGRVRTQ (83 aa)). Zn(2+) is bound by residues Cys140, Cys143, Cys157, Cys160, Cys183, Cys186, Cys197, and Cys200. CXXCXGXG motif repeat units follow at residues 140 to 147 (CDRCEGTG), 157 to 164 (CSTCNGSG), 183 to 190 (CPTCRGTG), and 197 to 204 (CDKCGGDG).

This sequence belongs to the DnaJ family. As to quaternary structure, homodimer. It depends on Zn(2+) as a cofactor.

It is found in the cytoplasm. In terms of biological role, participates actively in the response to hyperosmotic and heat shock by preventing the aggregation of stress-denatured proteins and by disaggregating proteins, also in an autonomous, DnaK-independent fashion. Unfolded proteins bind initially to DnaJ; upon interaction with the DnaJ-bound protein, DnaK hydrolyzes its bound ATP, resulting in the formation of a stable complex. GrpE releases ADP from DnaK; ATP binding to DnaK triggers the release of the substrate protein, thus completing the reaction cycle. Several rounds of ATP-dependent interactions between DnaJ, DnaK and GrpE are required for fully efficient folding. Also involved, together with DnaK and GrpE, in the DNA replication of plasmids through activation of initiation proteins. The protein is Chaperone protein DnaJ 1 of Corynebacterium diphtheriae (strain ATCC 700971 / NCTC 13129 / Biotype gravis).